A 159-amino-acid chain; its full sequence is Transcriptional repressor NrdR (159 aa).

Residues 3 to 34 (CPFCRHDDTQVVDSRVSEDGAAIRRRRRCSAC) fold into a zinc finger. The region spanning 49 to 139 (PAVVKKDGSR…VYRRFEDVSE (91 aa)) is the ATP-cone domain.

It belongs to the NrdR family. Zn(2+) serves as cofactor.

Its function is as follows. Negatively regulates transcription of bacterial ribonucleotide reductase nrd genes and operons by binding to NrdR-boxes. The protein is Transcriptional repressor NrdR of Burkholderia thailandensis (strain ATCC 700388 / DSM 13276 / CCUG 48851 / CIP 106301 / E264).